The sequence spans 423 residues: Gamma-glutamyl phosphate reductase (423 aa).

The protein belongs to the gamma-glutamyl phosphate reductase family.

Its subcellular location is the cytoplasm. It catalyses the reaction L-glutamate 5-semialdehyde + phosphate + NADP(+) = L-glutamyl 5-phosphate + NADPH + H(+). Its pathway is amino-acid biosynthesis; L-proline biosynthesis; L-glutamate 5-semialdehyde from L-glutamate: step 2/2. Catalyzes the NADPH-dependent reduction of L-glutamate 5-phosphate into L-glutamate 5-semialdehyde and phosphate. The product spontaneously undergoes cyclization to form 1-pyrroline-5-carboxylate. The protein is Gamma-glutamyl phosphate reductase of Burkholderia orbicola (strain AU 1054).